The chain runs to 348 residues: Organic solute transporter alpha-like protein 3 (348 aa).

Topologically, residues 1 to 49 (MAKEHGAMRSVLNLIGSVMLPQDTSNCSDRHDTPSAPEFLSHLQPFQTV) are extracellular. An N-linked (GlcNAc...) asparagine glycan is attached at Asn26. The helical transmembrane segment at 50-70 (LLSIASFSTTIVLCLSLIHWF) threads the bilayer. Topologically, residues 71 to 84 (YVYKYVSIEKRRNK) are cytoplasmic. The chain crosses the membrane as a helical span at residues 85 to 105 (LYWLIAVFPVACSCSFIAMCV). Residues 106 to 109 (PRTA) are Extracellular-facing. A helical transmembrane segment spans residues 110–130 (VILTCIGVLYYLMCLFVIVSL). Topologically, residues 131-180 (ARHLFGGRESFSTCLQYDDRPIDFRSPPFCCIIPKLPTARSTEKNIRRLE) are cytoplasmic. The chain crosses the membrane as a helical span at residues 181-201 (WCVLQAPIVRSIIIFLDVVAV). At 202 to 213 (AEMREDATPYIR) the chain is on the extracellular side. The chain crosses the membrane as a helical span at residues 214–234 (YSDMASLCSLLLAIFGVHTLA). Over 235–240 (RVTSNK) the chain is Cytoplasmic. A helical membrane pass occupies residues 241-261 (LSAYCFMSMFRLVDISLLFFS). The Extracellular portion of the chain corresponds to 262–291 (AQQPMIFQNVLLRFNLISCGPLLNAQENAY). Residues 292 to 312 (FVCNFIITCEMLLLSVLATWL) traverse the membrane as a helical segment. The Cytoplasmic segment spans residues 313 to 348 (LAPRHNAMFDAYRPSMALSETTASLNETEQSMILDH).

It belongs to the OST-alpha family.

It is found in the cell membrane. Its function is as follows. Probable transporter. The chain is Organic solute transporter alpha-like protein 3 (osta-3) from Caenorhabditis elegans.